The sequence spans 486 residues: Cardiolipin synthase A (486 aa).

2 consecutive transmembrane segments (helical) span residues 3 to 23 (TFYT…IAGV) and 38 to 58 (MAWL…YLSF). 2 PLD phosphodiesterase domains span residues 219–246 (MDLR…VDPR) and 399–426 (EGGL…DMRS). Catalysis depends on residues His-224, Lys-226, Asp-231, His-404, Lys-406, and Asp-411.

It belongs to the phospholipase D family. Cardiolipin synthase subfamily. ClsA sub-subfamily.

Its subcellular location is the cell inner membrane. It carries out the reaction 2 a 1,2-diacyl-sn-glycero-3-phospho-(1'-sn-glycerol) = a cardiolipin + glycerol. In terms of biological role, catalyzes the reversible phosphatidyl group transfer from one phosphatidylglycerol molecule to another to form cardiolipin (CL) (diphosphatidylglycerol) and glycerol. The sequence is that of Cardiolipin synthase A from Klebsiella pneumoniae subsp. pneumoniae (strain ATCC 700721 / MGH 78578).